We begin with the raw amino-acid sequence, 376 residues long: Alanine racemase (376 aa).

Lys-36 serves as the catalytic Proton acceptor; specific for D-alanine. At Lys-36 the chain carries N6-(pyridoxal phosphate)lysine. Arg-134 lines the substrate pocket. Residue Tyr-266 is the Proton acceptor; specific for L-alanine of the active site. Position 314 (Met-314) interacts with substrate.

Belongs to the alanine racemase family. Pyridoxal 5'-phosphate serves as cofactor.

It catalyses the reaction L-alanine = D-alanine. It functions in the pathway amino-acid biosynthesis; D-alanine biosynthesis; D-alanine from L-alanine: step 1/1. Catalyzes the interconversion of L-alanine and D-alanine. May also act on other amino acids. This Nitratidesulfovibrio vulgaris (strain DP4) (Desulfovibrio vulgaris) protein is Alanine racemase (alr).